Here is a 314-residue protein sequence, read N- to C-terminus: Lipid A biosynthesis acyltransferase 2 (314 aa).

Residues 17–37 traverse the membrane as a helical segment; the sequence is LSPVYWFTWFVLGMIAGISMF. An HXXXXD motif motif is present at residues 137–142; sequence HGWSVD.

This sequence belongs to the LpxL/LpxM/LpxP family. LpxM subfamily.

Its subcellular location is the cell inner membrane. It carries out the reaction an alpha-Kdo-(2-&gt;4)-alpha-Kdo-(2-&gt;6)-(acyl)-lipid IVA + a fatty acyl-[ACP] = an alpha-Kdo-(2-&gt;4)-alpha-Kdo-(2-&gt;6)-lipid A + holo-[ACP]. The protein operates within glycolipid biosynthesis; KDO(2)-lipid A biosynthesis; KDO(2)-lipid A from CMP-3-deoxy-D-manno-octulosonate and lipid IV(A): step 4/4. It participates in bacterial outer membrane biogenesis; lipopolysaccharide biosynthesis. Functionally, catalyzes the transfer of an acyl chain from an acyl-[acyl-carrier-protein] (ACP) to a Kdo(2)-(acyl)-lipid IV(A) to form a Kdo(2)-lipid A. The polypeptide is Lipid A biosynthesis acyltransferase 2 (Shigella flexneri).